A 123-amino-acid chain; its full sequence is Large ribosomal subunit protein bL17 (123 aa).

It belongs to the bacterial ribosomal protein bL17 family. In terms of assembly, part of the 50S ribosomal subunit. Contacts protein L32.

The polypeptide is Large ribosomal subunit protein bL17 (Dichelobacter nodosus (strain VCS1703A)).